Here is a 114-residue protein sequence, read N- to C-terminus: MTSAEHLTKGQQAEDRALAYLEQQGLKLVERNVRYPFGEIDLIMRQGHKWIFIEVKYRQSKQFGGALQAVSRGKIARLNRAASHYMQLNQIDAQCRFDLLAIDGDDIQWITNAF.

It belongs to the UPF0102 family.

This Shewanella loihica (strain ATCC BAA-1088 / PV-4) protein is UPF0102 protein Shew_0226.